The primary structure comprises 1038 residues: Eukaryotic translation initiation factor 3 subunit A (1038 aa).

Residues 92–121 are a coiled coil; it reads LKKFIELAEKKVTEAQAKADEIQSSLESAA. One can recognise a PCI domain in the interval 339–523; that stretch reads MTKAVSFVLL…GVLTFDTDVF (185 aa). A coiled-coil region spans residues 611-899; sequence IDKKKEAATD…QKQREEEAEA (289 aa). 2 stretches are compositionally biased toward basic and acidic residues: residues 621-632 and 800-901; these read ALQRKQREEETR and RHEE…EARR. 2 disordered regions span residues 621–641 and 800–1038; these read ALQR…QQLQ and RHEE…QQGQ. Composition is skewed to low complexity over residues 943 to 952 and 976 to 993; these read KEAAGGAAPE and GASA…AAPS. Polar residues predominate over residues 1002-1019; it reads DSGSSTPPSRTQTPATTS.

The protein belongs to the eIF-3 subunit A family. In terms of assembly, component of the eukaryotic translation initiation factor 3 (eIF-3) complex.

It localises to the cytoplasm. In terms of biological role, RNA-binding component of the eukaryotic translation initiation factor 3 (eIF-3) complex, which is involved in protein synthesis of a specialized repertoire of mRNAs and, together with other initiation factors, stimulates binding of mRNA and methionyl-tRNAi to the 40S ribosome. The eIF-3 complex specifically targets and initiates translation of a subset of mRNAs involved in cell proliferation. The polypeptide is Eukaryotic translation initiation factor 3 subunit A (tif32) (Aspergillus oryzae (strain ATCC 42149 / RIB 40) (Yellow koji mold)).